Here is a 314-residue protein sequence, read N- to C-terminus: BCL2/adenovirus E1B 19 kDa protein-interacting protein 2 (314 aa).

Positions 1 to 21 are disordered; that stretch reads MEGVELKEEWQDEDFPIPLPE. Acidic residues predominate over residues 10–21; sequence WQDEDFPIPLPE. Phosphoserine is present on residues S41 and S77. The segment at 76–100 is disordered; sequence ESGEIDLDGLDTPSENSNEFEWEDD. T87 bears the Phosphothreonine mark. A phosphoserine mark is found at S89, S92, and S114. Residues 147–304 form the CRAL-TRIO domain; that stretch reads IEPYKKVISH…CIKQVDQELN (158 aa).

Its subcellular location is the cytoplasm. The protein resides in the perinuclear region. Functionally, implicated in the suppression of cell death. Interacts with the BCL-2 and adenovirus E1B 19 kDa proteins. The polypeptide is BCL2/adenovirus E1B 19 kDa protein-interacting protein 2 (BNIP2) (Homo sapiens (Human)).